The chain runs to 139 residues: MDTIGHHYIVEAAGCDPNVIGDANKIREIFLEAAKRGNMEVKASYFFKFSPMGVSGVVIVAESHISVHTWPEKGYAALDVYTCGENADPEKAVDYILEQFKAQYAHVSEIKRGIEEEDRTFTHTILTWEERLDRRNGKP.

Serine 63 serves as the catalytic Schiff-base intermediate with substrate; via pyruvic acid. Residue serine 63 is modified to Pyruvic acid (Ser); by autocatalysis. Histidine 68 serves as the catalytic Proton acceptor; for processing activity. Residue cysteine 83 is the Proton donor; for catalytic activity of the active site.

This sequence belongs to the prokaryotic AdoMetDC family. Type 1 subfamily. Heterotetramer of two alpha and two beta chains arranged as a dimer of alpha/beta heterodimers. Pyruvate is required as a cofactor. Post-translationally, is synthesized initially as an inactive proenzyme. Formation of the active enzyme involves a self-maturation process in which the active site pyruvoyl group is generated from an internal serine residue via an autocatalytic post-translational modification. Two non-identical subunits are generated from the proenzyme in this reaction, and the pyruvate is formed at the N-terminus of the alpha chain, which is derived from the carboxyl end of the proenzyme. The post-translation cleavage follows an unusual pathway, termed non-hydrolytic serinolysis, in which the side chain hydroxyl group of the serine supplies its oxygen atom to form the C-terminus of the beta chain, while the remainder of the serine residue undergoes an oxidative deamination to produce ammonia and the pyruvoyl group blocking the N-terminus of the alpha chain.

The catalysed reaction is S-adenosyl-L-methionine + H(+) = S-adenosyl 3-(methylsulfanyl)propylamine + CO2. It participates in amine and polyamine biosynthesis; S-adenosylmethioninamine biosynthesis; S-adenosylmethioninamine from S-adenosyl-L-methionine: step 1/1. Functionally, catalyzes the decarboxylation of S-adenosylmethionine to S-adenosylmethioninamine (dcAdoMet), the propylamine donor required for the synthesis of the polyamines spermine and spermidine from the diamine putrescine. This Pyrococcus horikoshii (strain ATCC 700860 / DSM 12428 / JCM 9974 / NBRC 100139 / OT-3) protein is S-adenosylmethionine decarboxylase proenzyme.